Consider the following 419-residue polypeptide: 2-amino-3-ketobutyrate coenzyme A ligase, mitochondrial (419 aa).

Residues 1–21 (MWAGRVLHAALSRAPRESRAQ) constitute a mitochondrion transit peptide. K45 bears the N6-acetyllysine; alternate mark. K45 bears the N6-succinyllysine; alternate mark. 134–135 (CF) lines the pyridoxal 5'-phosphate pocket. Position 159 (H159) interacts with substrate. At K187 the chain carries N6-acetyllysine; alternate. An N6-succinyllysine; alternate modification is found at K187. Residues S206, 231–234 (DESH), 262–265 (TLGK), and 295–296 (SN) contribute to the pyridoxal 5'-phosphate site. K265 is modified (N6-(pyridoxal phosphate)lysine). N6-succinyllysine is present on residues K326 and K368. N6-acetyllysine; alternate is present on K383. K383 bears the N6-succinyllysine; alternate mark. Position 389 (R389) interacts with substrate.

Belongs to the class-II pyridoxal-phosphate-dependent aminotransferase family. The cofactor is pyridoxal 5'-phosphate.

It localises to the mitochondrion. The protein resides in the nucleus. It carries out the reaction glycine + acetyl-CoA = (2S)-2-amino-3-oxobutanoate + CoA. It functions in the pathway amino-acid degradation; L-threonine degradation via oxydo-reductase pathway; glycine from L-threonine: step 2/2. In terms of biological role, pyridoxal phosphate (PLP) dependent enzyme, which catalyzes the cleavage of 2-amino-3-oxobutanoate to glycine and acetyl-CoA. Catalyzes the second reaction step on the main metabolic degradation pathway for L-threonine. The protein is 2-amino-3-ketobutyrate coenzyme A ligase, mitochondrial (GCAT) of Bos taurus (Bovine).